A 74-amino-acid polypeptide reads, in one-letter code: Translation initiation factor IF-1 (74 aa).

The S1-like domain occupies 1–72; it reads MADTEKLKML…TRGRITYRHR (72 aa).

It belongs to the IF-1 family. Component of the 30S ribosomal translation pre-initiation complex which assembles on the 30S ribosome in the order IF-2 and IF-3, IF-1 and N-formylmethionyl-tRNA(fMet); mRNA recruitment can occur at any time during PIC assembly.

Its subcellular location is the cytoplasm. One of the essential components for the initiation of protein synthesis. Stabilizes the binding of IF-2 and IF-3 on the 30S subunit to which N-formylmethionyl-tRNA(fMet) subsequently binds. Helps modulate mRNA selection, yielding the 30S pre-initiation complex (PIC). Upon addition of the 50S ribosomal subunit IF-1, IF-2 and IF-3 are released leaving the mature 70S translation initiation complex. The sequence is that of Translation initiation factor IF-1 from Ureaplasma parvum serovar 3 (strain ATCC 700970).